The chain runs to 553 residues: Hydroxylamine reductase (553 aa).

Cys3, Cys6, Cys18, and Cys25 together coordinate [2Fe-2S] cluster. Residues His252, Glu276, Cys320, Cys408, Cys436, Cys461, Glu495, and Lys497 each contribute to the hybrid [4Fe-2O-2S] cluster site. The residue at position 408 (Cys408) is a Cysteine persulfide.

The protein belongs to the HCP family. Requires [2Fe-2S] cluster as cofactor. The cofactor is hybrid [4Fe-2O-2S] cluster.

The protein resides in the cytoplasm. It catalyses the reaction A + NH4(+) + H2O = hydroxylamine + AH2 + H(+). Functionally, catalyzes the reduction of hydroxylamine to form NH(3) and H(2)O. The protein is Hydroxylamine reductase of Vibrio vulnificus (strain YJ016).